The sequence spans 346 residues: NADPH dehydrogenase (346 aa).

FMN is bound at residue 23–26; sequence SPMC. Tyr28 is a binding site for substrate. FMN is bound by residues Ala60 and Gln102. 164–167 contributes to the substrate binding site; the sequence is HGAH. FMN is bound by residues Arg215 and 307-308; that span reads GR.

Belongs to the NADH:flavin oxidoreductase/NADH oxidase family. NamA subfamily. In terms of assembly, homotetramer. FMN is required as a cofactor.

It carries out the reaction A + NADPH + H(+) = AH2 + NADP(+). Catalyzes the reduction of the double bond of an array of alpha,beta-unsaturated aldehydes and ketones. It also reduces the nitro group of nitroester and nitroaromatic compounds. It could have a role in detoxification processes. The protein is NADPH dehydrogenase of Bacillus cytotoxicus (strain DSM 22905 / CIP 110041 / 391-98 / NVH 391-98).